We begin with the raw amino-acid sequence, 441 residues long: Probable xylan O-acetyltransferase 10 (441 aa).

The Cytoplasmic segment spans residues 1–19 (MMKPQHGGMAGHGGGRTRS). Residues 20–40 (PFLTSYALTLAFITFVSVLYF) form a helical; Signal-anchor for type II membrane protein membrane-spanning segment. Residues 41–441 (KDFSSTLHQP…ELLYSKLFFP (401 aa)) are Lumenal-facing. A disordered region spans residues 50-81 (PFLTRPPPHRRQIARPRAPSHHHGGGSSSGGG). The segment covering 56 to 73 (PPHRRQIARPRAPSHHHG) has biased composition (basic residues). 4 cysteine pairs are disulfide-bonded: cysteine 97-cysteine 148, cysteine 119-cysteine 184, cysteine 128-cysteine 422, and cysteine 341-cysteine 418. Asparagine 154 is a glycosylation site (N-linked (GlcNAc...) asparagine). The GDS motif motif lies at 171-173 (GDS). The Nucleophile role is filled by serine 173. Asparagine 212, asparagine 343, and asparagine 381 each carry an N-linked (GlcNAc...) asparagine glycan. The active-site Proton donor is aspartate 417. Residues 417 to 420 (DCTH) carry the DXXH motif motif. Histidine 420 functions as the Proton acceptor in the catalytic mechanism.

The protein belongs to the PC-esterase family. TBL subfamily. As to expression, expressed in roots, leaves and stems.

It localises to the golgi apparatus membrane. In terms of biological role, probable xylan acetyltransferase required for 2-O- and 3-O-monoacetylation of xylosyl residues in xylan. Possesses extremely low activity in vitro. This Oryza sativa subsp. japonica (Rice) protein is Probable xylan O-acetyltransferase 10.